Here is a 555-residue protein sequence, read N- to C-terminus: Protection of telomeres protein 1 (555 aa).

This sequence belongs to the telombin family. As to quaternary structure, self-associates. Interacts with ccq1, poz1 and tpz1.

The protein localises to the nucleus. Its subcellular location is the chromosome. It localises to the telomere. Its function is as follows. Single-stranded telomeric DNA-binding protein that is required to protect the 3'-end telomeric overhang. It binds the consensus sequence 5'-GGTTAC-3'. Regulates telomerase and telomere length. In Schizosaccharomyces pombe (strain 972 / ATCC 24843) (Fission yeast), this protein is Protection of telomeres protein 1 (pot1).